A 594-amino-acid chain; its full sequence is NADH-quinone oxidoreductase subunit C/D (594 aa).

Residues 1 to 185 form an NADH dehydrogenase I subunit C region; it reads MTTGSALYIP…DPFSLNLAKQ (185 aa). Positions 209-594 are NADH dehydrogenase I subunit D; the sequence is DYMFLNLGPN…IDFVMADVDR (386 aa).

This sequence in the N-terminal section; belongs to the complex I 30 kDa subunit family. It in the C-terminal section; belongs to the complex I 49 kDa subunit family. As to quaternary structure, NDH-1 is composed of 13 different subunits. Subunits NuoB, CD, E, F, and G constitute the peripheral sector of the complex.

It localises to the cell inner membrane. It catalyses the reaction a quinone + NADH + 5 H(+)(in) = a quinol + NAD(+) + 4 H(+)(out). In terms of biological role, NDH-1 shuttles electrons from NADH, via FMN and iron-sulfur (Fe-S) centers, to quinones in the respiratory chain. The immediate electron acceptor for the enzyme in this species is believed to be ubiquinone. Couples the redox reaction to proton translocation (for every two electrons transferred, four hydrogen ions are translocated across the cytoplasmic membrane), and thus conserves the redox energy in a proton gradient. This chain is NADH-quinone oxidoreductase subunit C/D, found in Pseudomonas fluorescens (strain Pf0-1).